The sequence spans 176 residues: COA8 family protein CG14806, mitochondrial (176 aa).

The N-terminal 23 residues, 1–23 (MNKCFRCQPRISLFQFSLPRCYA), are a transit peptide targeting the mitochondrion.

This sequence belongs to the COA8 family.

It localises to the mitochondrion inner membrane. Functionally, may be required for cytochrome c complex (COX) assembly and function, COX being the terminal component of the mitochondrial respiratory chain. (Microbial infection) Required for optimal replication of E.chaffeensis. This chain is COA8 family protein CG14806, mitochondrial, found in Drosophila melanogaster (Fruit fly).